We begin with the raw amino-acid sequence, 335 residues long: MSGTELDEPGKLKRAVIDASAGGVAGAISRMVTSPLDVIKIRFQVQLEPTATWALKDSQLKPKYNGLFRTTKDIFREEGLSGFWRGNVPALLMVVPYTSIQFAVLHKVKSFAAGSSKAENHAQLSPYLSYISGALAGCAATVGSYPFDLLRTVLASQGEPKVYPNMRSAFLSIVQTRGIKGLYAGLSPTLIEIIPYAGLQFGTYDTFKRWSMVYNKRYRSSSSSSTNPSDSLSSFQLFLCGLASGTVSKLVCHPLDVVKKRFQVEGLQRHPKYGARVELNAYKNMFDGLGQILRSEGWHGLYKGIVPSTIKAAPAGAVTFVAYELASDWFEANLT.

Transmembrane regions (helical) follow at residues 13 to 29 (KRAVIDASAGGVAGAIS), 88 to 105 (VPALLMVVPYTSIQFAVL), 127 to 150 (YLSYISGALAGCAATVGSYPFDLL), 182 to 199 (LYAGLSPTLIEIIPYAGL), 231 to 247 (SLSSFQLFLCGLASGTV), and 304 to 323 (GIVPSTIKAAPAGAVTFVAY). Solcar repeat units lie at residues 13–111 (KRAV…VKSF), 124–210 (LSPY…FKRW), and 232–329 (LSSF…ASDW).

This sequence belongs to the mitochondrial carrier (TC 2.A.29) family.

The protein resides in the mitochondrion inner membrane. Its function is as follows. Mitochondrial transporter that mediates uptake of thiamine diphosphate (ThDP) into mitochondria. This chain is Mitochondrial thiamine diphosphate carrier 1, found in Arabidopsis thaliana (Mouse-ear cress).